Here is a 148-residue protein sequence, read N- to C-terminus: Ribonuclease H (148 aa).

Positions 3–144 (DKEQVVIYTD…ADQLANRGVA (142 aa)) constitute an RNase H type-1 domain. Aspartate 12, glutamate 50, aspartate 72, and aspartate 136 together coordinate Mg(2+). The tract at residues 125–148 (GHTGDPGNERADQLANRGVAELPR) is disordered.

It belongs to the RNase H family. In terms of assembly, monomer. Requires Mg(2+) as cofactor.

The protein resides in the cytoplasm. The catalysed reaction is Endonucleolytic cleavage to 5'-phosphomonoester.. Endonuclease that specifically degrades the RNA of RNA-DNA hybrids. This chain is Ribonuclease H, found in Pseudomonas paraeruginosa (strain DSM 24068 / PA7) (Pseudomonas aeruginosa (strain PA7)).